Consider the following 469-residue polypeptide: Sorting and assembly machinery component 50 homolog (469 aa).

Residues 45–125 (VVVQHVHFDG…LDVTFEVTEL (81 aa)) enclose the POTRA domain. Position 255 is an N6-methyllysine (K255).

The protein belongs to the SAM50/omp85 family. As to quaternary structure, associates with the mitochondrial contact site and cristae organizing system (MICOS) complex, composed of at least MICOS10/MIC10, CHCHD3/MIC19, CHCHD6/MIC25, APOOL/MIC27, IMMT/MIC60, APOO/MIC23/MIC26 and QIL1/MIC13. This complex was also known under the names MINOS or MitOS complex. The MICOS complex associates with mitochondrial outer membrane proteins SAMM50, MTX1 and MTX2 (together described as components of the mitochondrial outer membrane sorting assembly machinery (SAM) complex) and DNAJC11, mitochondrial inner membrane protein TMEM11 and with HSPA9. The MICOS and SAM complexes together with DNAJC11 are part of a large protein complex spanning both membranes termed the mitochondrial intermembrane space bridging (MIB) complex. Interacts with IMMT/MIC60. Interacts with CHCHD3/MIC19. Interacts with ARMC1. (Microbial infection) Interacts with parasite T.gondii RH strain MAF1b1; the interaction is probably indirect and results in the disruption of the MIB complex and the formation of SPOTs (structures positive for outer mitochondrial membrane (OMM)), a cellular response to OMM stress, which leads to the constitutive shedding of OMM vesicles.

It localises to the mitochondrion outer membrane. The protein localises to the cytoplasm. It is found in the mitochondrion. Its function is as follows. Plays a crucial role in the maintenance of the structure of mitochondrial cristae and the proper assembly of the mitochondrial respiratory chain complexes. Required for the assembly of TOMM40 into the TOM complex. The chain is Sorting and assembly machinery component 50 homolog (Samm50) from Mus musculus (Mouse).